A 203-amino-acid chain; its full sequence is Small ribosomal subunit protein uS4 (203 aa).

Positions 93–153 constitute an S4 RNA-binding domain; it reads RRLDNIVYRL…DKSKNLQQVK (61 aa).

The protein belongs to the universal ribosomal protein uS4 family. Part of the 30S ribosomal subunit. Contacts protein S5. The interaction surface between S4 and S5 is involved in control of translational fidelity.

One of the primary rRNA binding proteins, it binds directly to 16S rRNA where it nucleates assembly of the body of the 30S subunit. In terms of biological role, with S5 and S12 plays an important role in translational accuracy. This is Small ribosomal subunit protein uS4 from Lactobacillus gasseri (strain ATCC 33323 / DSM 20243 / BCRC 14619 / CIP 102991 / JCM 1131 / KCTC 3163 / NCIMB 11718 / NCTC 13722 / AM63).